The chain runs to 799 residues: Zinc finger X-linked protein ZXDA (799 aa).

The interval 1-89 (MEIPKLLPAR…QPSGGGDDFF (89 aa)) is disordered. Residues 13-26 (LQGGGGGGIPAGGG) are compositionally biased toward gly residues. 10 consecutive C2H2-type zinc fingers follow at residues 267–291 (YLCPEALCGQTFAKKHQLKMHLLTH), 300–324 (FKCPLGGCGWTFTTSYKLKRHLQSH), 330–354 (FGCPAEGCGKSFTTVYNLKAHMKGH), 360–382 (FKCEVCEESFPTQAKLGAHQRSH), 389–413 (YQCAFSGCKKTFITVSALFSHNRAH), 420–444 (FSCSFPGCSKQYDKACRLKIHLRSH), 450–474 (FLCDFDGCGWNFTSMSKLLRHKRKH), 480–504 (FMCPVEGCGKSFTRAEHLKGHSITH), 510–534 (FVCPVAGCCARFSARSSLYIHSKKH), and 543–568 (SRCPISSCNKLFTSKHSMKTHMVKRH). The required for interaction with ZXDC stretch occupies residues 267–573 (YLCPEALCGQ…MVKRHKVGQD (307 aa)). Residues 572–699 (QDLLAQLEAA…NMDEVSSVSV (128 aa)) are required for transcriptional activation.

The protein belongs to the ZXD family. In terms of assembly, self-associates. Interacts with ZXDC and CIITA. May be expressed in brain, heart, kidney, liver, lung, muscle and placenta.

It is found in the nucleus. Its function is as follows. Cooperates with CIITA to promote transcription of MHC class I and MHC class II genes. This is Zinc finger X-linked protein ZXDA (ZXDA) from Homo sapiens (Human).